A 607-amino-acid polypeptide reads, in one-letter code: Bifunctional lysine-specific demethylase and histidyl-hydroxylase NO66 (607 aa).

2 disordered regions span residues Gly-23–Asn-121 and Ala-139–Glu-184. Positions Thr-25–Thr-37 are enriched in polar residues. The segment covering Ser-39–Lys-58 has biased composition (basic residues). Positions Asp-156–Thr-167 are enriched in basic and acidic residues. The JmjC domain maps to Glu-188–Ala-405. Positions 328, 330, and 371 each coordinate Fe cation.

Belongs to the ROX family. NO66 subfamily. Requires Fe(2+) as cofactor.

It is found in the nucleus. It catalyses the reaction L-histidyl-[protein] + 2-oxoglutarate + O2 = (3S)-3-hydroxy-L-histidyl-[protein] + succinate + CO2. The enzyme catalyses N(6),N(6)-dimethyl-L-lysyl(36)-[histone H3] + 2 2-oxoglutarate + 2 O2 = L-lysyl(36)-[histone H3] + 2 formaldehyde + 2 succinate + 2 CO2. Its function is as follows. Oxygenase that can act as both a histone lysine demethylase and a ribosomal histidine hydroxylase. Specifically demethylates 'Lys-4' (H3K4me) and 'Lys-36' (H3K36me) of histone H3, thereby playing a central role in histone code. Also catalyzes the hydroxylation of 60S ribosomal protein L8. The chain is Bifunctional lysine-specific demethylase and histidyl-hydroxylase NO66 from Branchiostoma floridae (Florida lancelet).